The following is a 528-amino-acid chain: Tyrosine--tRNA ligase, cytoplasmic (528 aa).

Position 1 is an N-acetylmethionine (Met-1). Residue Gly-2 is modified to N-acetylglycine; in Tyrosine--tRNA ligase, cytoplasmic, N-terminally processed. Tyr-39 contributes to the L-tyrosine binding site. Tyr-39 provides a ligand contact to trans-resveratrol. A 'HIGH' region motif is present at residues 44 to 52; that stretch reads TTGKPHVAY. 4 residues coordinate L-tyrosine: Tyr-166, Gln-170, Asp-173, and Gln-188. Trans-resveratrol contacts are provided by Gln-170 and Asp-173. An N6-acetyllysine modification is found at Lys-197. Ser-205 is subject to Phosphoserine. An N6-acetyllysine modification is found at Lys-206. Positions 222 to 226 match the 'KMSKS' region motif; that stretch reads KMSSS. Residues 242-247 carry the Nuclear localization signal motif; the sequence is KKKLKK. The segment at 339-363 is disordered; it reads AAYPDPSKQKPMAKGPAKNSEPEEV. The region spanning 364–468 is the tRNA-binding domain; it reads IPSRLDIRVG…AGSAPGERVF (105 aa). Ser-386 is modified (phosphoserine). N6-acetyllysine is present on residues Lys-474, Lys-482, and Lys-490.

This sequence belongs to the class-I aminoacyl-tRNA synthetase family. As to quaternary structure, homodimer. Interacts (when binding to resveratrol) with PARP1; interaction stimulates the poly-ADP-ribosyltransferase activity of PARP1.

It localises to the cytoplasm. Its subcellular location is the nucleus. It catalyses the reaction tRNA(Tyr) + L-tyrosine + ATP = L-tyrosyl-tRNA(Tyr) + AMP + diphosphate + H(+). Resveratrol strongly inhibits the tyrosine--tRNA ligase activity. Its function is as follows. Tyrosine--tRNA ligase that catalyzes the attachment of tyrosine to tRNA(Tyr) in a two-step reaction: tyrosine is first activated by ATP to form Tyr-AMP and then transferred to the acceptor end of tRNA(Tyr). Also acts as a positive regulator of poly-ADP-ribosylation in the nucleus, independently of its tyrosine--tRNA ligase activity. Activity is switched upon resveratrol-binding: resveratrol strongly inhibits the tyrosine--tRNA ligase activity and promotes relocalization to the nucleus, where YARS1 specifically stimulates the poly-ADP-ribosyltransferase activity of PARP1. This Pongo abelii (Sumatran orangutan) protein is Tyrosine--tRNA ligase, cytoplasmic (YARS1).